Consider the following 501-residue polypeptide: Solute carrier family 2, facilitated glucose transporter member 5 (501 aa).

N-acetylmethionine is present on Met1. The Cytoplasmic segment spans residues 1-18 (MEQQDQSMKEGRLTLVLA). Residues 19-39 (LATLIAAFGSSFQYGYNVAAV) form a helical membrane-spanning segment. A D-fructose-binding site is contributed by Tyr32. Topologically, residues 40–68 (NSPALLMQQFYNETYYGRTGEFMEDFPLT) are extracellular. Asn51 is a glycosylation site (N-linked (GlcNAc...) asparagine). The helical transmembrane segment at 69–91 (LLWSVTVSMFPFGGFIGSLLVGP) threads the bilayer. Residues 92-98 (LVNKFGR) are Cytoplasmic-facing. Residues 99-119 (KGALLFNNIFSIVPAILMGCS) traverse the membrane as a helical segment. At 120-126 (RVATSFE) the chain is on the extracellular side. Residues 127 to 149 (LIIISRLLVGICAGVSSNVVPMY) form a helical membrane-spanning segment. The Cytoplasmic segment spans residues 150 to 161 (LGELAPKNLRGA). Residues 162–182 (LGVVPQLFITVGILVAQIFGL) form a helical membrane-spanning segment. Gln167 serves as a coordination point for D-fructose. Residues 183–192 (RNLLANVDGW) are Extracellular-facing. Residues 193–213 (PILLGLTGVPAALQLLLLPFF) form a helical membrane-spanning segment. Topologically, residues 214 to 277 (PESPRYLLIQ…LFRMRSLRWQ (64 aa)) are cytoplasmic. The helical transmembrane segment at 278–298 (LLSIIVLMGGQQLSGVNAIYY) threads the bilayer. D-fructose-binding positions include Gln288 and 296–298 (IYY). Over 299 to 313 (YADQIYLSAGVPEEH) the chain is Extracellular. A helical membrane pass occupies residues 314–334 (VQYVTAGTGAVNVVMTFCAVF). The Cytoplasmic portion of the chain corresponds to 335–342 (VVELLGRR). The chain crosses the membrane as a helical span at residues 343-363 (LLLLLGFSICLIACCVLTAAL). At 364–371 (ALQDTVSW) the chain is on the extracellular side. Residues 372–394 (MPYISIVCVISYVIGHALGPSPI) form a helical membrane-spanning segment. His387 provides a ligand contact to D-fructose. Residues 395 to 412 (PALLITEIFLQSSRPSAF) are Cytoplasmic-facing. Residues 413-433 (MVGGSVHWLSNFTVGLIFPFI) traverse the membrane as a helical segment. Residue 419 to 420 (HW) coordinates D-fructose. Residues 434–439 (QEGLGP) are Extracellular-facing. A helical membrane pass occupies residues 440–460 (YSFIVFAVICLLTTIYIFLIV). The Cytoplasmic portion of the chain corresponds to 461–501 (PETKAKTFIEINQIFTKMNKVSEVYPEKEELKELPPVTSEQ).

As to expression, detected in skeletal muscle, and in jejunum brush border membrane and basolateral membrane (at protein level). Expressed in small intestine, and at much lower levels in kidney, skeletal muscle, and adipose tissue.

It is found in the apical cell membrane. It localises to the cell membrane. Its subcellular location is the sarcolemma. It catalyses the reaction D-fructose(out) = D-fructose(in). With respect to regulation, the uptake of 2-deoxyglucose is inhibited by cytochalasin B. Fructose transport is inhibited by the flavonoids epigallocatechin gallate and apigenin but not quercetin. Its function is as follows. Functions as a fructose transporter that has only low activity with other monosaccharides. Can mediate the uptake of 2-deoxyglucose, but with low efficiency. Essential for fructose uptake in the small intestine. Plays a role in the regulation of salt uptake and blood pressure in response to dietary fructose. Required for the development of high blood pressure in response to high dietary fructose intake. This Homo sapiens (Human) protein is Solute carrier family 2, facilitated glucose transporter member 5.